We begin with the raw amino-acid sequence, 601 residues long: Deoxyhypusine synthase (601 aa).

NAD(+)-binding positions include 109 to 113 (ANLMG) and 184 to 186 (SGG). 189–190 (EH) lines the spermidine pocket. Residues 210 to 242 (GHVSSTVSSEATAPPKGLQQRAEKPLGTRAAAG) form a disordered region. Over residues 211 to 220 (HVSSTVSSEA) the composition is skewed to polar residues. Residue Asp398 coordinates NAD(+). Residues 411 to 451 (PAARPAHRKGGPVADENAGNSKELKRSRKASSSSSTSATAV) are disordered. The segment covering 440 to 451 (ASSSSSTSATAV) has biased composition (low complexity). An NAD(+)-binding site is contributed by Gly489. His494 lines the spermidine pocket. An NAD(+)-binding site is contributed by 514–515 (NG). Residues 520-522 (GSD) and 529-535 (EALSWGK) each bind spermidine. The active-site Nucleophile is Lys535. An NAD(+)-binding site is contributed by 548–549 (EV). Positions 568–601 (RRATDDAQPRRKRSSRGARPPQDVSGHSHLCRGE) are disordered.

The protein belongs to the deoxyhypusine synthase family. In terms of assembly, homodimer. NAD(+) is required as a cofactor.

The catalysed reaction is [eIF5A protein]-L-lysine + spermidine = [eIF5A protein]-deoxyhypusine + propane-1,3-diamine. The protein operates within protein modification; eIF5A hypusination. With respect to regulation, N1-guanyl-1,7-diaminoheptane has a small inhibitory effect on activity. Functionally, catalyzes the NAD-dependent oxidative cleavage of spermidine and the subsequent transfer of the butylamine moiety of spermidine to the epsilon-amino group of a specific lysine residue of the eIF-5A precursor protein to form the intermediate deoxyhypusine residue. This is Deoxyhypusine synthase from Leishmania donovani.